A 467-amino-acid polypeptide reads, in one-letter code: FK506-binding protein 4 (467 aa).

Disordered regions lie at residues 64–163 (KATG…GDDD) and 208–357 (GNFV…KPTS). 3 stretches are compositionally biased toward acidic residues: residues 71-80 (DDDDEEEDEY), 147-163 (SDEE…GDDD), and 213-254 (PEDD…DELD). Basic and acidic residues-rich tracts occupy residues 271–287 (APKL…RPAE) and 312–332 (QKVE…DKKV). Positions 381–467 (GDRVGMRYIG…IFDVKLLEIK (87 aa)) constitute a PPIase FKBP-type domain.

The protein belongs to the FKBP-type PPIase family. FKBP3/4 subfamily. Binds to histones H3 and H4.

The protein resides in the nucleus. The enzyme catalyses [protein]-peptidylproline (omega=180) = [protein]-peptidylproline (omega=0). Its activity is regulated as follows. Inhibited by both FK506 and rapamycin. In terms of biological role, PPIase that acts as a histone chaperone. Histone proline isomerase that increases the rate of cis-trans isomerization at prolines on the histone H3 N-terminal tail. Proline isomerization influences H3 methylation thereby regulating gene expression. This is FK506-binding protein 4 (fkr-4) from Neurospora crassa (strain ATCC 24698 / 74-OR23-1A / CBS 708.71 / DSM 1257 / FGSC 987).